The primary structure comprises 447 residues: Tubulin beta-5 chain (447 aa).

Positions 11, 69, 138, 142, 143, 144, 204, and 226 each coordinate GTP. Position 69 (Glu-69) interacts with Mg(2+). Residues 424 to 447 (QYQDATAEEEGEFDEDEELDDAMG) are disordered. Acidic residues predominate over residues 429-447 (TAEEEGEFDEDEELDDAMG).

This sequence belongs to the tubulin family. In terms of assembly, dimer of alpha and beta chains. A typical microtubule is a hollow water-filled tube with an outer diameter of 25 nm and an inner diameter of 15 nM. Alpha-beta heterodimers associate head-to-tail to form protofilaments running lengthwise along the microtubule wall with the beta-tubulin subunit facing the microtubule plus end conferring a structural polarity. Microtubules usually have 13 protofilaments but different protofilament numbers can be found in some organisms and specialized cells. Mg(2+) is required as a cofactor.

The protein localises to the cytoplasm. It is found in the cytoskeleton. In terms of biological role, tubulin is the major constituent of microtubules, a cylinder consisting of laterally associated linear protofilaments composed of alpha- and beta-tubulin heterodimers. Microtubules grow by the addition of GTP-tubulin dimers to the microtubule end, where a stabilizing cap forms. Below the cap, tubulin dimers are in GDP-bound state, owing to GTPase activity of alpha-tubulin. The protein is Tubulin beta-5 chain (TUBB5) of Ectocarpus variabilis (Brown alga).